The following is a 174-amino-acid chain: Dual-action ribosomal maturation protein DarP (174 aa).

This sequence belongs to the DarP family.

Its subcellular location is the cytoplasm. In terms of biological role, member of a network of 50S ribosomal subunit biogenesis factors which assembles along the 30S-50S interface, preventing incorrect 23S rRNA structures from forming. Promotes peptidyl transferase center (PTC) maturation. The sequence is that of Dual-action ribosomal maturation protein DarP from Vibrio campbellii (strain ATCC BAA-1116).